A 454-amino-acid polypeptide reads, in one-letter code: Glutamine synthetase (454 aa).

A GS beta-grasp domain is found at 19 to 111 (NNVKFIRFQF…VICDVYKDEK (93 aa)). The region spanning 118–454 (PRSRLKAILE…DWETGKYLIY (337 aa)) is the GS catalytic domain. 2 residues coordinate Mg(2+): Glu-142 and Glu-144. Position 194 (Glu-194) interacts with ATP. The Mg(2+) site is built by Glu-199 and Glu-206. Residues 250 to 251 (NG) and Gly-251 contribute to the L-glutamate site. Position 255 (His-255) interacts with Mg(2+). ATP contacts are provided by residues 257–259 (HQS) and Ser-259. 3 residues coordinate L-glutamate: Arg-309, Glu-315, and Arg-327. ATP is bound by residues Arg-327, Arg-332, and Lys-339. Glu-344 contacts Mg(2+). Arg-346 contacts L-glutamate.

The protein belongs to the glutamine synthetase family. In terms of assembly, oligomer of 12 subunits arranged in the form of two hexagons. Mg(2+) serves as cofactor.

The protein resides in the cytoplasm. The catalysed reaction is L-glutamate + NH4(+) + ATP = L-glutamine + ADP + phosphate + H(+). With respect to regulation, feedback inhibited by glycine and alanine, and inhibited by low concentrations of methionine sulfoximine. Its function is as follows. Probably involved in nitrogen metabolism via ammonium assimilation. Catalyzes the ATP-dependent biosynthesis of glutamine from glutamate and ammonia. Beta-glutamate is a much poorer substrate than alpha-glutamate. The protein is Glutamine synthetase of Methanocaldococcus jannaschii (strain ATCC 43067 / DSM 2661 / JAL-1 / JCM 10045 / NBRC 100440) (Methanococcus jannaschii).